A 141-amino-acid chain; its full sequence is Large ribosomal subunit protein uL11 (141 aa).

This sequence belongs to the universal ribosomal protein uL11 family. Part of the ribosomal stalk of the 50S ribosomal subunit. Interacts with L10 and the large rRNA to form the base of the stalk. L10 forms an elongated spine to which L12 dimers bind in a sequential fashion forming a multimeric L10(L12)X complex. In terms of processing, one or more lysine residues are methylated.

Its function is as follows. Forms part of the ribosomal stalk which helps the ribosome interact with GTP-bound translation factors. This chain is Large ribosomal subunit protein uL11, found in Synechococcus sp. (strain CC9902).